A 660-amino-acid polypeptide reads, in one-letter code: Bifunctional polymyxin resistance protein ArnA (660 aa).

The segment at 1-304 (MKAIVFAYHD…EMGIVTDVRV (304 aa)) is formyltransferase ArnAFT. Catalysis depends on His104, which acts as the Proton donor; for formyltransferase activity. Residues Arg114 and 136–140 (TAKAD) contribute to the (6R)-10-formyltetrahydrofolate site. Residues 314–660 (RRQRVLILGV…RGAVEELGNK (347 aa)) form a dehydrogenase ArnADH region. Residues Asp347 and 368–369 (DV) contribute to the NAD(+) site. UDP-alpha-D-glucuronate is bound by residues Ala393, Tyr398, and 432 to 433 (TS). Glu434 acts as the Proton acceptor; for decarboxylase activity in catalysis. Residues Arg460, Asn492, 526–535 (KLVDGGEQKR), and Tyr613 contribute to the UDP-alpha-D-glucuronate site. The Proton donor; for decarboxylase activity role is filled by Arg619.

It in the N-terminal section; belongs to the Fmt family. UDP-L-Ara4N formyltransferase subfamily. This sequence in the C-terminal section; belongs to the NAD(P)-dependent epimerase/dehydratase family. UDP-glucuronic acid decarboxylase subfamily. In terms of assembly, homohexamer, formed by a dimer of trimers.

It catalyses the reaction UDP-alpha-D-glucuronate + NAD(+) = UDP-beta-L-threo-pentopyranos-4-ulose + CO2 + NADH. The catalysed reaction is UDP-4-amino-4-deoxy-beta-L-arabinose + (6R)-10-formyltetrahydrofolate = UDP-4-deoxy-4-formamido-beta-L-arabinose + (6S)-5,6,7,8-tetrahydrofolate + H(+). It functions in the pathway nucleotide-sugar biosynthesis; UDP-4-deoxy-4-formamido-beta-L-arabinose biosynthesis; UDP-4-deoxy-4-formamido-beta-L-arabinose from UDP-alpha-D-glucuronate: step 1/3. It participates in nucleotide-sugar biosynthesis; UDP-4-deoxy-4-formamido-beta-L-arabinose biosynthesis; UDP-4-deoxy-4-formamido-beta-L-arabinose from UDP-alpha-D-glucuronate: step 3/3. The protein operates within bacterial outer membrane biogenesis; lipopolysaccharide biosynthesis. Functionally, bifunctional enzyme that catalyzes the oxidative decarboxylation of UDP-glucuronic acid (UDP-GlcUA) to UDP-4-keto-arabinose (UDP-Ara4O) and the addition of a formyl group to UDP-4-amino-4-deoxy-L-arabinose (UDP-L-Ara4N) to form UDP-L-4-formamido-arabinose (UDP-L-Ara4FN). The modified arabinose is attached to lipid A and is required for resistance to polymyxin and cationic antimicrobial peptides. The protein is Bifunctional polymyxin resistance protein ArnA of Proteus mirabilis (strain HI4320).